Consider the following 306-residue polypeptide: Acetyl-coenzyme A carboxylase carboxyl transferase subunit beta (306 aa).

In terms of domain architecture, CoA carboxyltransferase N-terminal spans 27–296; sequence LWHKCPSCEA…PEFVAAPVEP (270 aa). C31, C34, C50, and C53 together coordinate Zn(2+). Residues 31 to 53 form a C4-type zinc finger; sequence CPSCEAVLYRPELEKTLDVCPKC.

The protein belongs to the AccD/PCCB family. Acetyl-CoA carboxylase is a heterohexamer composed of biotin carboxyl carrier protein (AccB), biotin carboxylase (AccC) and two subunits each of ACCase subunit alpha (AccA) and ACCase subunit beta (AccD). Requires Zn(2+) as cofactor.

It is found in the cytoplasm. The catalysed reaction is N(6)-carboxybiotinyl-L-lysyl-[protein] + acetyl-CoA = N(6)-biotinyl-L-lysyl-[protein] + malonyl-CoA. It functions in the pathway lipid metabolism; malonyl-CoA biosynthesis; malonyl-CoA from acetyl-CoA: step 1/1. Component of the acetyl coenzyme A carboxylase (ACC) complex. Biotin carboxylase (BC) catalyzes the carboxylation of biotin on its carrier protein (BCCP) and then the CO(2) group is transferred by the transcarboxylase to acetyl-CoA to form malonyl-CoA. The sequence is that of Acetyl-coenzyme A carboxylase carboxyl transferase subunit beta from Pseudomonas fluorescens (strain ATCC BAA-477 / NRRL B-23932 / Pf-5).